A 223-amino-acid polypeptide reads, in one-letter code: Endonuclease V (223 aa).

Mg(2+) contacts are provided by Asp35 and Asp103.

This sequence belongs to the endonuclease V family. Requires Mg(2+) as cofactor.

The protein resides in the cytoplasm. It catalyses the reaction Endonucleolytic cleavage at apurinic or apyrimidinic sites to products with a 5'-phosphate.. In terms of biological role, DNA repair enzyme involved in the repair of deaminated bases. Selectively cleaves double-stranded DNA at the second phosphodiester bond 3' to a deoxyinosine leaving behind the intact lesion on the nicked DNA. In Escherichia coli O139:H28 (strain E24377A / ETEC), this protein is Endonuclease V.